A 539-amino-acid chain; its full sequence is Chaperonin GroEL 1 (539 aa).

ATP contacts are provided by residues 29–32 (TLGP), 86–90 (DGTTT), glycine 413, 478–480 (NAA), and aspartate 494.

It belongs to the chaperonin (HSP60) family. Forms a cylinder of 14 subunits composed of two heptameric rings stacked back-to-back. Interacts with the co-chaperonin GroES.

Its subcellular location is the cytoplasm. The enzyme catalyses ATP + H2O + a folded polypeptide = ADP + phosphate + an unfolded polypeptide.. Functionally, together with its co-chaperonin GroES, plays an essential role in assisting protein folding. The GroEL-GroES system forms a nano-cage that allows encapsulation of the non-native substrate proteins and provides a physical environment optimized to promote and accelerate protein folding. This Corynebacterium diphtheriae (strain ATCC 700971 / NCTC 13129 / Biotype gravis) protein is Chaperonin GroEL 1.